A 1939-amino-acid chain; its full sequence is Myosin heavy chain, skeletal muscle, adult (1939 aa).

A2 bears the N-acetylalanine mark. The Myosin N-terminal SH3-like domain occupies 34 to 83 (DAKSSVFVVHPKESFVKGTIQSKEGGKVTVKTEGGETLTVKEDQVFSMNP). At K36 the chain carries N6-methyllysine. One can recognise a Myosin motor domain in the interval 87–781 (DKIEDMAMMT…LLGLLEEMRD (695 aa)). At K131 the chain carries N6,N6,N6-trimethyllysine. An ATP-binding site is contributed by 180 to 187 (GESGAGKT). Position 552 is an N6,N6,N6-trimethyllysine (K552). The tract at residues 658–680 (LNKLMANLRSTHPHFVRCIIPNE) is actin-binding. A Pros-methylhistidine modification is found at H756. Positions 760–774 (RFGHTKVFFKAGLLG) are actin-binding. The 30-residue stretch at 784-813 (LAEIITRTQARCRGFLMRVEYRRMVERRES) folds into the IQ domain. The tract at residues 839–841 (IKP) is hinge. Positions 842–1939 (LLKSAESEKE…IHGKKIEEEE (1098 aa)) form a coiled coil.

It belongs to the TRAFAC class myosin-kinesin ATPase superfamily. Myosin family. As to quaternary structure, muscle myosin is a hexameric protein that consists of 2 heavy chain subunits (MHC), 2 alkali light chain subunits (MLC) and 2 regulatory light chain subunits (MLC-2).

The protein localises to the cytoplasm. It localises to the myofibril. Its function is as follows. Muscle contraction. Myosin is a protein that binds to F-actin and has ATPase activity that is activated by F-actin. This chain is Myosin heavy chain, skeletal muscle, adult, found in Gallus gallus (Chicken).